Reading from the N-terminus, the 147-residue chain is Ribosome-binding factor A (147 aa).

Residues 126–147 (LKKNAQPAGDAHPYKDDDAMND) are disordered. The span at 137–147 (HPYKDDDAMND) shows a compositional bias: basic and acidic residues.

Belongs to the RbfA family. In terms of assembly, monomer. Binds 30S ribosomal subunits, but not 50S ribosomal subunits or 70S ribosomes.

The protein resides in the cytoplasm. Functionally, one of several proteins that assist in the late maturation steps of the functional core of the 30S ribosomal subunit. Associates with free 30S ribosomal subunits (but not with 30S subunits that are part of 70S ribosomes or polysomes). Required for efficient processing of 16S rRNA. May interact with the 5'-terminal helix region of 16S rRNA. The chain is Ribosome-binding factor A from Corynebacterium diphtheriae (strain ATCC 700971 / NCTC 13129 / Biotype gravis).